Reading from the N-terminus, the 366-residue chain is MAELQQLQEFEIPTGREALRGNHSALLRVADYCEDNYVQATDKRKALEETMAFTTQALASVAYQVGNLAGHTLRMLDLQGAALRQVEARVSTLGQMVNMHMEKVARREIGTLATVQRLPPGQKVIAPENLPPLTPYCRRPLNFGCLDDIGHGIKDLSTQLSRTGTLSRKSIKAPATPASATLGRPPRIPEPVHLPVVPDGRLSAASSAFSLASAGSAEGVGGAPTPKGQAAPPAPPLPSSLDPPPPPAAVEVFQRPPTLEELSPPPPDEELPLPLDLPPPPPLDGDELGLPPPPPGFGPDEPSWVPASYLEKVVTLYPYTSQKDNELSFSEGTVICVTRRYSDGWCEGVSSEGTGFFPGNYVEPSC.

Residues 33-61 (CEDNYVQATDKRKALEETMAFTTQALASV) are a coiled coil. The tract at residues 161 to 195 (SRTGTLSRKSIKAPATPASATLGRPPRIPEPVHLP) is disordered. 2 positions are modified to phosphoserine: S213 and S216. The disordered stretch occupies residues 215 to 302 (GSAEGVGGAP…PPPGFGPDEP (88 aa)). The segment covering 232-248 (PPAPPLPSSLDPPPPPA) has biased composition (pro residues). In terms of domain architecture, SH3 spans 308 to 366 (SYLEKVVTLYPYTSQKDNELSFSEGTVICVTRRYSDGWCEGVSSEGTGFFPGNYVEPSC). A Phosphoserine modification is found at S342.

The protein belongs to the ABI family. As to quaternary structure, may interact with PAK1 and PAK2. Probably interacts with TARSH. Expressed in heart, lung, liver, pancreas, kidney, placenta and at low levels in brain and skeletal muscle.

The protein resides in the cytoplasm. May inhibit tumor metastasis. In vitro, reduces cell motility. The chain is ABI gene family member 3 (ABI3) from Homo sapiens (Human).